The following is a 356-amino-acid chain: Glutamine synthetase cytosolic isozyme 1-1 (356 aa).

The region spanning 19–99 (IIAEYIWIGG…VMCDCYTPAG (81 aa)) is the GS beta-grasp domain. Positions 106-356 (KRHNAAKIFS…IAETTIIWKP (251 aa)) constitute a GS catalytic domain.

Belongs to the glutamine synthetase family. As to quaternary structure, homooctamer. As to expression, highly expressed in leaf blades, at intermediate levels in spikelets (rice flower) and at lower levels in roots.

Its subcellular location is the cytoplasm. The catalysed reaction is L-glutamate + NH4(+) + ATP = L-glutamine + ADP + phosphate + H(+). High-affinity glutamine synthetase involved in ammonium assimilation. Seems to be a major component of the cytosolic glutamine synthetic pathway in leaf blades. Plays an important role in maintaining carbon and nitrogen metabolic balance during ammonium assimilation in shoots and roots, thus controlling plant growth and development. Plays an important role in maintaining broad range of metabolites and transcripts involved in the maintenance of plant metabolic homeostasis and development of plastid in roots. The protein is Glutamine synthetase cytosolic isozyme 1-1 of Oryza sativa subsp. japonica (Rice).